The chain runs to 510 residues: Gelatinase (510 aa).

The first 30 residues, 1–30 (MMKGNKILYILGTGIFVGSSCLFSSLFVAA), serve as a signal peptide directing secretion. A propeptide spanning residues 31-192 (EEQVYSESEV…IMEKQDLTEH (162 aa)) is cleaved from the precursor. Asp324 provides a ligand contact to Ca(2+). Zn(2+) is bound at residue His328. Residue Glu329 is part of the active site. The Zn(2+) site is built by His332 and Glu352. Ser376 is a binding site for Ca(2+). The Proton donor role is filled by His419.

The protein belongs to the peptidase M4 family.

The protein resides in the secreted. It catalyses the reaction Preferential cleavage: Xaa-|-Leu, Xaa-|-Phe, Xaa-|-Tyr, Xaa-|-Ala.. Its activity is regulated as follows. Inhibited by L-leucine hydroxamate and phosphoramidon. Not inhibited by phenylmethanesulfonyl fluoride. Reversibly inactivated by straight-chain aliphatic alcohols. Metalloprotease capable of the hydrolysis of insoluble hydrophobic substrates. Hydrolyzes azocoll and gelatin and, at a lower rate, soluble and insoluble collagens. Does not cleave short synthetic peptides. Preferentially hydrolyzes the 24-Phe-|-Phe-25 bond in the insulin B-chain, followed by the 5-His-|-Leu-6 bond. Inactivates endothelin-1, primarily by cleavage of the 5-Ser-|-Leu-6 and 16-His-|-Leu-17 bonds. Hydrolyzes the alpha chain of C3 to generate a C3b-like protein. Inhibits complement-mediated hemolysis and opsinization of bacteria. Hydrolyzes the insect antimicrobial peptide cecropin. Decreases the length of E.faecalis chains via the activation of autolysin. Degrades polymerized fibrin. This chain is Gelatinase, found in Enterococcus faecalis (strain ATCC 700802 / V583).